Here is a 545-residue protein sequence, read N- to C-terminus: Hsk1-interacting molecule 1 (545 aa).

The segment at 492–541 (VDAKPGYCENCREKFDNFESHIRSSRHRRFAENNDNFKDLDELFALVQRP) adopts a DBF4-type zinc-finger fold. Zn(2+)-binding residues include Cys499, Cys502, His512, and His518.

In terms of assembly, associates with hsk1. Interacts with mcm10. Hyperphosphorylated at the G1/S and S-phases of the cell cycle.

Its subcellular location is the nucleus. In terms of biological role, activates hsk1 kinase and is essential for G1/S transition. Has a role in S-phase checkpoint control induced by replication fork blocks after nucleotide deprivation and DNA damage. The sequence is that of Hsk1-interacting molecule 1 (him1) from Schizosaccharomyces pombe (strain 972 / ATCC 24843) (Fission yeast).